A 151-amino-acid polypeptide reads, in one-letter code: Putative pre-16S rRNA nuclease (151 aa).

It belongs to the YqgF nuclease family.

It is found in the cytoplasm. In terms of biological role, could be a nuclease involved in processing of the 5'-end of pre-16S rRNA. In Aster yellows witches'-broom phytoplasma (strain AYWB), this protein is Putative pre-16S rRNA nuclease.